The chain runs to 193 residues: dTTP/UTP pyrophosphatase (193 aa).

Asp-71 acts as the Proton acceptor in catalysis.

The protein belongs to the Maf family. YhdE subfamily. A divalent metal cation is required as a cofactor.

It is found in the cytoplasm. The catalysed reaction is dTTP + H2O = dTMP + diphosphate + H(+). It catalyses the reaction UTP + H2O = UMP + diphosphate + H(+). In terms of biological role, nucleoside triphosphate pyrophosphatase that hydrolyzes dTTP and UTP. May have a dual role in cell division arrest and in preventing the incorporation of modified nucleotides into cellular nucleic acids. This Dictyoglomus turgidum (strain DSM 6724 / Z-1310) protein is dTTP/UTP pyrophosphatase.